The following is a 619-amino-acid chain: Interferon-activable protein 204 (619 aa).

One can recognise a Pyrin domain in the interval 1 to 88; it reads MVNEYKRIVL…AEILKKERSE (88 aa). A Nuclear export signal motif is present at residues 24 to 35; the sequence is LFKSLLARDLNL. The segment covering 86–99 has biased composition (basic and acidic residues); it reads RSEVTGETSLEKNG. The interval 86 to 223 is disordered; that stretch reads RSEVTGETSL…QNQNIPRGAV (138 aa). The span at 122-153 shows a compositional bias: low complexity; that stretch reads TSATQEETSTAQAGTSTAQARTSTAQAGTSTA. Repeat copies occupy residues 134-140, 141-147, and 148-154. The segment at 134 to 154 is 3 X 7 AA tandem repeats of A-[GR]-T-S-T-A-Q; it reads AGTSTAQARTSTAQAGTSTAQ. The short motif at 150–157 is the Nuclear localization signal element; sequence TSTAQKRK. Basic and acidic residues predominate over residues 159 to 176; the sequence is MREEETGVKKSKAAKEPD. Residues 190–206 are compositionally biased toward low complexity; it reads SPILHSSSSASSNIPSA. The span at 207 to 218 shows a compositional bias: polar residues; it reads KNQKSQPQNQNI. HIN-200 domains lie at 213 to 413 and 417 to 615; these read PQNQ…IKIS and NVPK…MQVI. The segment at 550-614 is interaction with ID2; sequence KKTERNKFIY…RSVRHSYMQV (65 aa).

This sequence belongs to the HIN-200 family. Interacts with UBTF. Interacts with RUNX2. Interacts with ID1, ID2 and ID3. Interacts with STING. In terms of processing, acetylated upon bacterial infection, leading to translocation from nucleus to cytoplasm and subsequent recruitment of STING to activate IFN-beta production. Present in osteoblasts (at protein level).

It localises to the nucleus. It is found in the nucleolus. Its subcellular location is the cytoplasm. In terms of biological role, interferon-stimulated protein that plays a role in several biological processes including cell differentiation, autophagy and innate immunity. Cooperates with CGAS to sense dsDNA and activates the STING-dependent type I IFN pathway. Mechanistically, gets acetylated upon bacterial infection and then translocates from nucleus into cytoplasm to recruit STING for activation of TBK1-dependent IRF3 nuclear translocation and IFN-beta release. Inhibits the transcription of ribosomal RNA. May inhibit DNA binding by UBTF. Inhibits cell growth via p53/TP53 and RB1-dependent and independent pathways. Acts as a coactivator of RUNX2 during osteogenesis. May be involved in macrophage differentiation. Enables skeletal muscle and cardiac myocyte differentiation by sequestring Id proteins in the cytosol and promoting their ubiquitination and subsequent degradation. The sequence is that of Interferon-activable protein 204 (Ifi204) from Mus musculus (Mouse).